Here is a 250-residue protein sequence, read N- to C-terminus: AA9 family lytic polysaccharide monooxygenase F (250 aa).

Positions 1–18 are cleaved as a signal peptide; it reads MHLKTFSNLLVFVATVAA. Residue histidine 19 coordinates Cu(2+). N-linked (GlcNAc...) asparagine glycosylation is found at asparagine 24 and asparagine 85. 2 disulfides stabilise this stretch: cysteine 70–cysteine 199 and cysteine 169–cysteine 250. Residue histidine 108 participates in Cu(2+) binding. Asparagine 146 carries N-linked (GlcNAc...) asparagine glycosylation. O2 contacts are provided by histidine 185 and glutamine 194. Tyrosine 196 lines the Cu(2+) pocket.

This sequence belongs to the polysaccharide monooxygenase AA9 family. The cofactor is Cu(2+).

It localises to the secreted. It catalyses the reaction [(1-&gt;4)-beta-D-glucosyl]n+m + reduced acceptor + O2 = 4-dehydro-beta-D-glucosyl-[(1-&gt;4)-beta-D-glucosyl]n-1 + [(1-&gt;4)-beta-D-glucosyl]m + acceptor + H2O.. Its function is as follows. Lytic polysaccharide monooxygenase (LPMO) that depolymerizes crystalline and amorphous polysaccharides via the oxidation of scissile alpha- or beta-(1-4)-glycosidic bonds, yielding C1 and C4 oxidation products. Catalysis by LPMOs requires the reduction of the active-site copper from Cu(II) to Cu(I) by a reducing agent and H(2)O(2) or O(2) as a cosubstrate. In Botryotinia fuckeliana (strain B05.10) (Noble rot fungus), this protein is AA9 family lytic polysaccharide monooxygenase F.